We begin with the raw amino-acid sequence, 441 residues long: MTTTRFAPSPTGHIHVGNLRTALMNYLIARKAGGTFILRLDDTDRERSKQEYADGIQRDLEWLGLTWDRIERQSDRLDRYAEAAEGLRAAGRLYEVFETPTELDLKRKKQLNMGKPPVYDRAGLKLSAEDKDRLRAEGRAGYWRFLLDQERIEWADGILGDISIDAASVSDPVLIRADGQVLYTFASSVDDAEMGVTHIVRGADHVTNTATQIQIIRALGSEPPAFAHHSLLTGAQGEELSKRLGTLSIRDLRESGVAPEALLSLMARLGSSQPVELKMSLDELAEGFDLGQFGASPTKFDAEDLWPLTREANQSRPLAEVRDRIAALGVPDELVERFWRVASQNITKLDDLAGWWQIFSTGAEPQIDPEDADFIAEAMKLLPPPPYTDATWGEFTNAVKQATGRKGKGLFMPLRKALTGQAHGPDMSEVMPLLQVVRARG.

The 'HIGH' region motif lies at 8-18 (PSPTGHIHVGN). The 'KMSKS' region motif lies at 239–243 (ELSKR). K242 contributes to the ATP binding site.

It belongs to the class-I aminoacyl-tRNA synthetase family. Glutamate--tRNA ligase type 1 subfamily. In terms of assembly, monomer.

It is found in the cytoplasm. The catalysed reaction is tRNA(Glu) + L-glutamate + ATP = L-glutamyl-tRNA(Glu) + AMP + diphosphate. Its function is as follows. Catalyzes the attachment of glutamate to tRNA(Glu) in a two-step reaction: glutamate is first activated by ATP to form Glu-AMP and then transferred to the acceptor end of tRNA(Glu). The sequence is that of Glutamate--tRNA ligase 1 from Paracoccus denitrificans (strain Pd 1222).